The chain runs to 216 residues: Glycerol-3-phosphate acyltransferase (216 aa).

5 helical membrane-spanning segments follow: residues Ile4–Val24, Val56–Leu76, Pro80–Phe100, Phe112–Leu132, and Gly138–Phe158.

It belongs to the PlsY family. Probably interacts with PlsX.

Its subcellular location is the cell inner membrane. It catalyses the reaction an acyl phosphate + sn-glycerol 3-phosphate = a 1-acyl-sn-glycero-3-phosphate + phosphate. It functions in the pathway lipid metabolism; phospholipid metabolism. Functionally, catalyzes the transfer of an acyl group from acyl-phosphate (acyl-PO(4)) to glycerol-3-phosphate (G3P) to form lysophosphatidic acid (LPA). This enzyme utilizes acyl-phosphate as fatty acyl donor, but not acyl-CoA or acyl-ACP. This Yersinia pseudotuberculosis serotype O:1b (strain IP 31758) protein is Glycerol-3-phosphate acyltransferase.